Here is a 177-residue protein sequence, read N- to C-terminus: Large ribosomal subunit protein uL6 (177 aa).

Basic and acidic residues predominate over residues 154–171; it reads PEPYKGKGVRYADEQVRR. Residues 154 to 177 are disordered; that stretch reads PEPYKGKGVRYADEQVRRKEAKKK.

Belongs to the universal ribosomal protein uL6 family. As to quaternary structure, part of the 50S ribosomal subunit.

This protein binds to the 23S rRNA, and is important in its secondary structure. It is located near the subunit interface in the base of the L7/L12 stalk, and near the tRNA binding site of the peptidyltransferase center. The sequence is that of Large ribosomal subunit protein uL6 from Marinobacter nauticus (strain ATCC 700491 / DSM 11845 / VT8) (Marinobacter aquaeolei).